Here is a 407-residue protein sequence, read N- to C-terminus: Probable tRNA sulfurtransferase (407 aa).

Positions 61-165 (NEITYRLSKI…LDAIYMYEEV (105 aa)) constitute a THUMP domain. ATP contacts are provided by residues 183–184 (ML), 208–209 (HF), Arg265, Gly287, and Gln296.

It belongs to the ThiI family.

It localises to the cytoplasm. It carries out the reaction [ThiI sulfur-carrier protein]-S-sulfanyl-L-cysteine + a uridine in tRNA + 2 reduced [2Fe-2S]-[ferredoxin] + ATP + H(+) = [ThiI sulfur-carrier protein]-L-cysteine + a 4-thiouridine in tRNA + 2 oxidized [2Fe-2S]-[ferredoxin] + AMP + diphosphate. The enzyme catalyses [ThiS sulfur-carrier protein]-C-terminal Gly-Gly-AMP + S-sulfanyl-L-cysteinyl-[cysteine desulfurase] + AH2 = [ThiS sulfur-carrier protein]-C-terminal-Gly-aminoethanethioate + L-cysteinyl-[cysteine desulfurase] + A + AMP + 2 H(+). Its pathway is cofactor biosynthesis; thiamine diphosphate biosynthesis. Functionally, catalyzes the ATP-dependent transfer of a sulfur to tRNA to produce 4-thiouridine in position 8 of tRNAs, which functions as a near-UV photosensor. Also catalyzes the transfer of sulfur to the sulfur carrier protein ThiS, forming ThiS-thiocarboxylate. This is a step in the synthesis of thiazole, in the thiamine biosynthesis pathway. The sulfur is donated as persulfide by IscS. The polypeptide is Probable tRNA sulfurtransferase (Staphylococcus aureus (strain N315)).